We begin with the raw amino-acid sequence, 96 residues long: Nucleoid-associated protein CT_335 (96 aa).

This sequence belongs to the YbaB/EbfC family. As to quaternary structure, homodimer.

Its subcellular location is the cytoplasm. It localises to the nucleoid. Binds to DNA and alters its conformation. May be involved in regulation of gene expression, nucleoid organization and DNA protection. The sequence is that of Nucleoid-associated protein CT_335 from Chlamydia trachomatis serovar D (strain ATCC VR-885 / DSM 19411 / UW-3/Cx).